A 949-amino-acid polypeptide reads, in one-letter code: Translation initiation factor IF-2 (949 aa).

Disordered stretches follow at residues 54-183, 217-288, and 305-357; these read FLKP…EAAP, LPAA…EVAL, and EVVA…EMQA. Basic and acidic residues-rich tracts occupy residues 67–92 and 101–164; these read DQEK…ERHI and IEAK…EEAA. Composition is skewed to low complexity over residues 165 to 183 and 217 to 228; these read RAAA…EAAP and LPAAAPAAPSAP. Composition is skewed to basic and acidic residues over residues 235–288 and 330–339; these read PVEE…EVAL and KYQDNEDRLQ. A tr-type G domain is found at 445–619; sequence TRPPVITVMG…EMLNLQSNPT (175 aa). The G1 stretch occupies residues 454–461; it reads GHVDHGKT. 454 to 461 is a binding site for GTP; sequence GHVDHGKT. Residues 479–483 are G2; sequence GITQH. A G3 region spans residues 501–504; the sequence is DTPG. GTP contacts are provided by residues 501–505 and 555–558; these read DTPGH and NKID. A G4 region spans residues 555-558; that stretch reads NKID. The tract at residues 591-593 is G5; the sequence is SAK.

It belongs to the TRAFAC class translation factor GTPase superfamily. Classic translation factor GTPase family. IF-2 subfamily.

The protein resides in the cytoplasm. Its function is as follows. One of the essential components for the initiation of protein synthesis. Protects formylmethionyl-tRNA from spontaneous hydrolysis and promotes its binding to the 30S ribosomal subunits. Also involved in the hydrolysis of GTP during the formation of the 70S ribosomal complex. The protein is Translation initiation factor IF-2 of Magnetococcus marinus (strain ATCC BAA-1437 / JCM 17883 / MC-1).